We begin with the raw amino-acid sequence, 159 residues long: MEKTDEERKKAQMLDARARNISHNVRCTECGSQSIEDSQADIAILLRQLIRNEIGAGKTDKEIYSKLEDEFGETVLYAPKFDLQTAALWLTPVIIAGGTAAGIVYQKHRLRKNVDIMALNLIRGVPLTPKERVTILDVLIPPSPPPQGVVSRLRRWLNR.

Topologically, residues 1-82 (MEKTDEERKK…ETVLYAPKFD (82 aa)) are mitochondrial intermembrane. C27 and C30 together coordinate heme. A helical membrane pass occupies residues 83-105 (LQTAALWLTPVIIAGGTAAGIVY). The Mitochondrial matrix portion of the chain corresponds to 106-159 (QKHRLRKNVDIMALNLIRGVPLTPKERVTILDVLIPPSPPPQGVVSRLRRWLNR).

Belongs to the CcmH/CycL/Ccl2/NrfF family. Interacts (via N-terminus) with CYTC-1. Interacts with CCMFN1 and CCMFN2.

The protein localises to the mitochondrion inner membrane. Functionally, plays a central role in mitochondrial cytochrome c maturation. Probable component of a heme lyase complex involved in the reduction of apocytochrome c. Forms a complex with CCMF proteins (CCMFC, CCMFN1 and CCMFN2) that performs the assembly of heme with c-type apocytochromes in mitochondria. This Arabidopsis thaliana (Mouse-ear cress) protein is Cytochrome c-type biogenesis CcmH-like mitochondrial protein.